We begin with the raw amino-acid sequence, 1172 residues long: DNA-directed RNA polymerase subunit beta (1172 aa).

Belongs to the RNA polymerase beta chain family. The RNAP catalytic core consists of 2 alpha, 1 beta, 1 beta' and 1 omega subunit. When a sigma factor is associated with the core the holoenzyme is formed, which can initiate transcription.

It carries out the reaction RNA(n) + a ribonucleoside 5'-triphosphate = RNA(n+1) + diphosphate. Its function is as follows. DNA-dependent RNA polymerase catalyzes the transcription of DNA into RNA using the four ribonucleoside triphosphates as substrates. This is DNA-directed RNA polymerase subunit beta from Pseudothermotoga lettingae (strain ATCC BAA-301 / DSM 14385 / NBRC 107922 / TMO) (Thermotoga lettingae).